The following is a 137-amino-acid chain: Large ribosomal subunit protein uL16 (137 aa).

Belongs to the universal ribosomal protein uL16 family. Part of the 50S ribosomal subunit.

Binds 23S rRNA and is also seen to make contacts with the A and possibly P site tRNAs. This is Large ribosomal subunit protein uL16 from Sinorhizobium medicae (strain WSM419) (Ensifer medicae).